A 336-amino-acid polypeptide reads, in one-letter code: Heme A synthase (336 aa).

5 consecutive transmembrane segments (helical) span residues 5 to 25 (LTRW…VGGI), 92 to 112 (GRAT…KGII), 117 to 137 (ILSY…GWYM), 153 to 173 (LAFH…KLVK), and 191 to 211 (LIFS…GALV). Histidine 255 is a heme binding site. A run of 3 helical transmembrane segments spans residues 257-277 (LGAY…LKVK), 284-304 (VAFY…ITLL), and 307-327 (VPII…SVVI). A heme-binding site is contributed by histidine 315.

It belongs to the COX15/CtaA family. Type 2 subfamily. Interacts with CtaB. It depends on heme b as a cofactor.

It localises to the cell membrane. It catalyses the reaction Fe(II)-heme o + 2 A + H2O = Fe(II)-heme a + 2 AH2. It functions in the pathway porphyrin-containing compound metabolism; heme A biosynthesis; heme A from heme O: step 1/1. Its function is as follows. Catalyzes the conversion of heme O to heme A by two successive hydroxylations of the methyl group at C8. The first hydroxylation forms heme I, the second hydroxylation results in an unstable dihydroxymethyl group, which spontaneously dehydrates, resulting in the formyl group of heme A. The chain is Heme A synthase from Rickettsia bellii (strain OSU 85-389).